The sequence spans 115 residues: Parathyroid hormone (115 aa).

The N-terminal stretch at 1 to 25 is a signal peptide; the sequence is MMSASTMAKVMILMLAVCLLTQADG. The propeptide occupies 26-31; it reads KPVKKR. Residues 51–69 form an important for receptor binding region; that stretch reads RMQWLRKKLQDVHNFVSLG. The tract at residues 76-101 is disordered; it reads EGSYQRPTKKEENVLVDGNSKSLGEG.

This sequence belongs to the parathyroid hormone family. Interacts with PTH1R (via N-terminal extracellular domain). In terms of tissue distribution, hypothalamus and parathyroid gland.

It localises to the secreted. Functionally, parathyroid hormone elevates calcium level by dissolving the salts in bone and preventing their renal excretion. Acts by binding to its receptor, PTH1R, activating G protein-coupled receptor signaling. Stimulates [1-14C]-2-deoxy-D-glucose (2DG) transport and glycogen synthesis in osteoblastic cells. The polypeptide is Parathyroid hormone (Pth) (Rattus norvegicus (Rat)).